The sequence spans 1454 residues: Receptor-type tyrosine-protein phosphatase T (1454 aa).

Positions 1–29 (MGSLGGLALCLLRLLLLGLQRPPLPGAGA) are cleaved as a signal peptide. Over 30–770 (QSAAGGCSFD…EKQVDNTVKM (741 aa)) the chain is Extracellular. Residues 34-195 (GGCSFDEHYS…VRVLAHPCRK (162 aa)) enclose the MAM domain. N-linked (GlcNAc...) asparagine glycosylation is found at N82, N102, N141, and N212. One can recognise an Ig-like C2-type domain in the interval 197–288 (PHFLRLQNVE…SGVSNYAELI (92 aa)). C217 and C271 form a disulfide bridge. Fibronectin type-III domains lie at 295–388 (PIAP…TKCA), 393–487 (GPQN…TEED), and 488–594 (VPGA…SAPS). N-linked (GlcNAc...) asparagine glycans are attached at residues N425, N514, N551, N605, N658, and N688. A Fibronectin type-III 4 domain is found at 670 to 767 (AELKPSNLPV…VEPEKQVDNT (98 aa)). A helical transmembrane segment spans residues 771 to 791 (AGVIAGLLMFIIILLGVMLTI). Residues 792–1454 (KRRKLAKKQK…EVALEYLSSF (663 aa)) are Cytoplasmic-facing. A disordered region spans residues 800 to 852 (QKETQSGAQREMGPVASTDKPTAKLGTNRNDEGFSSSSQDVNGFTDGSRGELS). A compositionally biased stretch (polar residues) spans 824–841 (LGTNRNDEGFSSSSQDVN). 2 consecutive Tyrosine-protein phosphatase domains span residues 902 to 1156 (FKEE…ILEA) and 1188 to 1450 (IKDE…ALEY). Substrate contacts are provided by residues D1065, 1097-1103 (CSAGAGR), and Q1141. C1097 acts as the Phosphocysteine intermediate in catalysis. S1221 carries the post-translational modification Phosphoserine. C1391 functions as the Phosphocysteine intermediate in the catalytic mechanism.

Belongs to the protein-tyrosine phosphatase family. Receptor class 2B subfamily. Expression is restricted to the CNS. Distributed throughout the brain and spinal cord.

Its subcellular location is the membrane. The enzyme catalyses O-phospho-L-tyrosyl-[protein] + H2O = L-tyrosyl-[protein] + phosphate. Functionally, may be involved in both signal transduction and cellular adhesion in the CNS. May have specific signaling roles in the tyrosine phosphorylation/dephosphorylation pathway in the anterior compartment of the adult cerebellar cortex. This is Receptor-type tyrosine-protein phosphatase T (Ptprt) from Mus musculus (Mouse).